The sequence spans 553 residues: Hyaluronan synthase 3 (553 aa).

Residues 1–15 (MPVQLTTALRVVGTS) lie on the Cytoplasmic side of the membrane. Residues 16 to 36 (LFALAVLGGILAAYVTGYQFI) form a helical membrane-spanning segment. Residues 37-44 (HTEKHYLS) lie on the Extracellular side of the membrane. Residues 45-65 (FGLYGAILGLHLLIQSLFAFL) traverse the membrane as a helical segment. Topologically, residues 66-377 (EHRRMRRAGQ…NSLWFHKHHL (312 aa)) are cytoplasmic. Residues 378–398 (WMTYESVVTGFFPFFLIATVI) traverse the membrane as a helical segment. Residues 399–408 (QLFYRGRIWN) lie on the Extracellular side of the membrane. Residues 409–429 (ILLFLLTVQLVGIIKATYACF) traverse the membrane as a helical segment. Over 430–440 (LRGNAEMIFMS) the chain is Cytoplasmic. A helical transmembrane segment spans residues 441 to 461 (LYSLLYMSSLLPAKIFAIATI). The N-linked (GlcNAc...) asparagine glycan is linked to Asn462. Residues 462–473 (NKSGWGTSGRKT) lie on the Extracellular side of the membrane. The chain crosses the membrane as a helical span at residues 474 to 494 (IVVNFIGLIPVSIWVAVLLGG). Residues 495-515 (LAYTAYCQDLFSETELAFLVS) are Cytoplasmic-facing. The helical transmembrane segment at 516–536 (GAILYGCYWVALLMLYLAIIA) threads the bilayer. Residues 537–553 (RRCGKKPEQYSLAFAEV) are Extracellular-facing.

This sequence belongs to the NodC/HAS family. In terms of assembly, homodimers. Forms heterodimers with HAS2 and HAS1. Mg(2+) is required as a cofactor. In terms of processing, O-GlcNAcylation increases the hyaluronan synthase activity, HAS3 stability and its plasma membrane residence. The concentration of UDP-GlcNAc controls the level of O-GlcNAc modification.

It localises to the cell membrane. The protein localises to the golgi apparatus membrane. Its subcellular location is the golgi apparatus. It is found in the trans-Golgi network membrane. The protein resides in the early endosome. It catalyses the reaction [hyaluronan](n) + UDP-N-acetyl-alpha-D-glucosamine = N-acetyl-beta-D-glucosaminyl-(1-&gt;4)-[hyaluronan](n) + UDP + H(+). The catalysed reaction is N-acetyl-beta-D-glucosaminyl-(1-&gt;4)-[hyaluronan](n) + UDP-alpha-D-glucuronate = [hyaluronan](n+1) + UDP + H(+). The protein operates within glycan biosynthesis; hyaluronan biosynthesis. With respect to regulation, the enzymatic activity depends on the availability of cytosolic levels of UDP-GlcUA and UDP-GlcNAc. In terms of biological role, catalyzes the addition of GlcNAc or GlcUA monosaccharides to the nascent hyaluronan polymer. Therefore, it is essential to hyaluronan synthesis a major component of most extracellular matrices that has a structural role in tissues architectures and regulates cell adhesion, migration and differentiation. This is one of three isoenzymes responsible for cellular hyaluronan synthesis. This is Hyaluronan synthase 3 from Homo sapiens (Human).